Consider the following 332-residue polypeptide: Invasin IpaD (332 aa).

Low complexity predominate over residues 1 to 25 (MNITTLTNSISTSSFSPNNTNGSST). Residues 1 to 43 (MNITTLTNSISTSSFSPNNTNGSSTETVNSDIKTTTSSHPVSS) form a disordered region. Positions 26-43 (ETVNSDIKTTTSSHPVSS) are enriched in polar residues. A coiled-coil region spans residues 44 to 77 (LTMLNDTLHNIRTTNQALKKELSQKTLTKTSLEE). The tract at residues 192 to 267 (VNSLKKALEE…KSLDNLGGNG (76 aa)) is ipaB binding.

This sequence belongs to the invasin protein D family.

It localises to the secreted. Its function is as follows. Required for bacterial invasion of host cells. Controls IpaB and IpaC secretion, and the efficiency with which they are physically inserted into target cell membranes. These proteins are exported via T3SS to form a pore in the host membrane that allows the translocation of the other effectors into the host cytoplasm. Along with IpaB, is essential for both blocking secretion through the Mxi/Spa translocon in the absence of a secretion-inducing signal, and for controlling the level of secretion in the presence of this signal. This Shigella flexneri protein is Invasin IpaD (ipaD).